Consider the following 298-residue polypeptide: MRHPEHQYLDLLAQVLEKGDQRIDRTGVGTRALFGAMIRFDLSDGRVPILTTKRVYWKTAVKEMLWFLTGQTNIQALLKENVRIWSDWPLARYRKETGDSISQEDFEKRVVEDNAFATRWGDLGPVYGKQWRRWLGADGREYDQIAELVQTLKSNPASRRMLFHAWNPPELGAMALPPCHMVYQYHVTSSGKLNCILYQRSCDLLLGAAFNYAAASALQLMLAQQADLTPGEFIWFGGDVHLYLNHLDQAREQISRAPRPFPTMRLTRRPDSIDGYRISDFEVDGYEPHAAIKADVAV.

Residues Arg25 and 159 to 160 (RR) each bind dUMP. Residue Cys179 is the Nucleophile of the active site. Residues 200-203 (RSCD), Asn211, and 241-243 (HLY) contribute to the dUMP site. Position 203 (Asp203) interacts with (6R)-5,10-methylene-5,6,7,8-tetrahydrofolate. Residue Ala297 participates in (6R)-5,10-methylene-5,6,7,8-tetrahydrofolate binding.

Belongs to the thymidylate synthase family. Bacterial-type ThyA subfamily. As to quaternary structure, homodimer.

It localises to the cytoplasm. It catalyses the reaction dUMP + (6R)-5,10-methylene-5,6,7,8-tetrahydrofolate = 7,8-dihydrofolate + dTMP. Its pathway is pyrimidine metabolism; dTTP biosynthesis. Catalyzes the reductive methylation of 2'-deoxyuridine-5'-monophosphate (dUMP) to 2'-deoxythymidine-5'-monophosphate (dTMP) while utilizing 5,10-methylenetetrahydrofolate (mTHF) as the methyl donor and reductant in the reaction, yielding dihydrofolate (DHF) as a by-product. This enzymatic reaction provides an intracellular de novo source of dTMP, an essential precursor for DNA biosynthesis. In Rhodopseudomonas palustris (strain BisA53), this protein is Thymidylate synthase.